A 931-amino-acid chain; its full sequence is Valine--tRNA ligase (931 aa).

Residues 43 to 53 carry the 'HIGH' region motif; it reads PNVTGALHIGH. The segment at 351–370 is disordered; sequence IPHTDKDGNAHDAEPRTIQT. Basic and acidic residues predominate over residues 353–365; that stretch reads HTDKDGNAHDAEP. The 'KMSKS' region signature appears at 552-556; it reads KMSKS. Lys-555 provides a ligand contact to ATP. A disordered region spans residues 691–717; sequence LQGRGLGEGDEAVPAPADGPLSPALSP. Residues 864–930 are a coiled coil; that stretch reads VIDIAAERER…DRLSAALARL (67 aa).

Belongs to the class-I aminoacyl-tRNA synthetase family. ValS type 1 subfamily. As to quaternary structure, monomer.

The protein resides in the cytoplasm. The catalysed reaction is tRNA(Val) + L-valine + ATP = L-valyl-tRNA(Val) + AMP + diphosphate. Functionally, catalyzes the attachment of valine to tRNA(Val). As ValRS can inadvertently accommodate and process structurally similar amino acids such as threonine, to avoid such errors, it has a 'posttransfer' editing activity that hydrolyzes mischarged Thr-tRNA(Val) in a tRNA-dependent manner. This chain is Valine--tRNA ligase, found in Sphingopyxis alaskensis (strain DSM 13593 / LMG 18877 / RB2256) (Sphingomonas alaskensis).